A 342-amino-acid chain; its full sequence is uncharacterized protein (342 aa).

It belongs to the cycloisomerase 2 family.

This is an uncharacterized protein from Staphylococcus aureus (strain NCTC 8325 / PS 47).